Here is a 236-residue protein sequence, read N- to C-terminus: tRNA (guanine-N(7)-)-methyltransferase (236 aa).

Basic and acidic residues predominate over residues Met1–Phe17. A disordered region spans residues Met1–Gly23. Positions 67, 92, 119, and 141 each coordinate S-adenosyl-L-methionine. Asp141 is a catalytic residue. Substrate is bound by residues Lys145 and Asp177.

Belongs to the class I-like SAM-binding methyltransferase superfamily. TrmB family.

The catalysed reaction is guanosine(46) in tRNA + S-adenosyl-L-methionine = N(7)-methylguanosine(46) in tRNA + S-adenosyl-L-homocysteine. Its pathway is tRNA modification; N(7)-methylguanine-tRNA biosynthesis. In terms of biological role, catalyzes the formation of N(7)-methylguanine at position 46 (m7G46) in tRNA. This chain is tRNA (guanine-N(7)-)-methyltransferase, found in Bradyrhizobium diazoefficiens (strain JCM 10833 / BCRC 13528 / IAM 13628 / NBRC 14792 / USDA 110).